We begin with the raw amino-acid sequence, 288 residues long: Proteasome subunit beta (288 aa).

Residues 1–60 (MESNADWGSRGGLPQAFLTPGISSFSEFLKGFAPEYLPSGRPLPGGLGSASAAGDIAPHG) constitute a propeptide, removed in mature form; by autocatalysis. Threonine 61 functions as the Nucleophile in the catalytic mechanism.

Belongs to the peptidase T1B family. As to quaternary structure, the 20S proteasome core is composed of 14 alpha and 14 beta subunits that assemble into four stacked heptameric rings, resulting in a barrel-shaped structure. The two inner rings, each composed of seven catalytic beta subunits, are sandwiched by two outer rings, each composed of seven alpha subunits. The catalytic chamber with the active sites is on the inside of the barrel. Has a gated structure, the ends of the cylinder being occluded by the N-termini of the alpha-subunits. Is capped by the proteasome-associated ATPase, ARC.

It is found in the cytoplasm. The catalysed reaction is Cleavage of peptide bonds with very broad specificity.. It participates in protein degradation; proteasomal Pup-dependent pathway. Its activity is regulated as follows. The formation of the proteasomal ATPase ARC-20S proteasome complex, likely via the docking of the C-termini of ARC into the intersubunit pockets in the alpha-rings, may trigger opening of the gate for substrate entry. Interconversion between the open-gate and close-gate conformations leads to a dynamic regulation of the 20S proteasome proteolysis activity. Its function is as follows. Component of the proteasome core, a large protease complex with broad specificity involved in protein degradation. The polypeptide is Proteasome subunit beta (Catenulispora acidiphila (strain DSM 44928 / JCM 14897 / NBRC 102108 / NRRL B-24433 / ID139908)).